The sequence spans 621 residues: Growth factor receptor-bound protein 10 (621 aa).

2 stretches are compositionally biased toward polar residues: residues 1 to 23 and 33 to 59; these read MNNDINSSVESLNSACNMQSDTD and HASNQGAASSSRGQPQASPRQKMQRSQ. The disordered stretch occupies residues 1–118; the sequence is MNNDINSSVE…PSQPPAKHCG (118 aa). Ser50 and Ser96 each carry phosphoserine. Positions 95-112 are enriched in pro residues; the sequence is GSPPSVAPSSLPPPPSQP. The Ras-associating domain occupies 194–278; it reads LRKDVKVFSE…SKFLFRKNYA (85 aa). One can recognise a PH domain in the interval 318–427; the sequence is CPEIQGFLQV…WMTAFRLLKY (110 aa). Ser455 carries the post-translational modification Phosphoserine; by MTOR and PKB/AKT1. Phosphoserine is present on residues Ser458 and Ser503. The SH2 domain occupies 520 to 601; the sequence is WFHGRISREE…SDLIQLVDFY (82 aa).

This sequence belongs to the GRB7/10/14 family. In terms of assembly, interacts with ligand-activated tyrosine kinase receptors, including FGFR1, INSR, IGF1R, MET and PDGFRB in a phosphotyrosine-dependent manner through the SH2 domain. Poorly binds to the EGFR. Directly interacts with MAP3K14/NIK and is recruited to the EGFR-ERBB2 complex. Interacts with GIGYF1/PERQ1 and GIGYF2/TNRC15. When unphosphorylated, interacts with AKT1 and when phosphorylated with YWHAE/14-3-3 epsilon. Interacts with NEDD4. Interacts with LRP6, thus interfering with the binding of AXIN1 to LRP6. Binds to activated NRAS. In terms of processing, phosphorylated on serine residues upon EGF, FGF and PDGF stimulation. In terms of tissue distribution, widely expressed.

Its subcellular location is the cytoplasm. Its activity is regulated as follows. Phosphorylation by mTORC1 stabilizes and activates GRB10 constituting a feedback pathway by which mTORC1 inhibits INSR-dependent signaling. Functionally, adapter protein which modulates coupling of a number of cell surface receptor kinases with specific signaling pathways. Binds to, and suppress signals from, activated receptors tyrosine kinases, including the insulin (INSR) and insulin-like growth factor (IGF1R) receptors. The inhibitory effect can be achieved by 2 mechanisms: interference with the signaling pathway and increased receptor degradation. Delays and reduces AKT1 phosphorylation in response to insulin stimulation. Blocks association between INSR and IRS1 and IRS2 and prevents insulin-stimulated IRS1 and IRS2 tyrosine phosphorylation. Recruits NEDD4 to IGF1R, leading to IGF1R ubiquitination, increased internalization and degradation by both the proteasomal and lysosomal pathways. A similar role in the mediation of ubiquitination also has been suggested with INSR. Negatively regulates Wnt signaling by interacting with LRP6 intracellular portion and interfering with the binding of AXIN1 to LRP6. Positive regulator of the KDR/VEGFR-2 signaling pathway. May inhibit NEDD4-mediated degradation of KDR/VEGFR-2. The protein is Growth factor receptor-bound protein 10 (Grb10) of Mus musculus (Mouse).